The chain runs to 174 residues: Gamma-crystallin E (174 aa).

2 Beta/gamma crystallin 'Greek key' domains span residues 2-40 and 41-83; these read GKIT…RVDS and GCWM…RLIP. Positions 84–87 are connecting peptide; sequence HSSS. Beta/gamma crystallin 'Greek key' domains follow at residues 88 to 128 and 129 to 171; these read HRIR…HVME and GYWV…RRIM.

Belongs to the beta/gamma-crystallin family. Detected in the superior olivary complex and fibers of the ventral aoustic stria of the auditory hindbrain.

In terms of biological role, crystallins are the dominant structural components of the vertebrate eye lens. This Rattus norvegicus (Rat) protein is Gamma-crystallin E (Cryge).